The chain runs to 226 residues: Ras-related protein RABA4a (226 aa).

The residue at position 2 (T2) is an N-acetylthreonine. 24–31 provides a ligand contact to GTP; it reads GDSAVGKS. An Effector region motif is present at residues 46-54; sequence SKATIGVEF. GTP is bound by residues 72–76, 130–133, and 160–161; these read DTAGQ, NKSD, and SA. The segment at 189-226 is disordered; sequence ASEDQENGNPGSLAGKKIDIVPGPGQVIPNKSNMCCNS. Over residues 217-226 the composition is skewed to polar residues; it reads PNKSNMCCNS. Residues C223 and C224 are each lipidated (S-geranylgeranyl cysteine).

The protein belongs to the small GTPase superfamily. Rab family. Interacts with TCTP1.

The protein localises to the cell membrane. Functionally, intracellular vesicle trafficking and protein transport. This is Ras-related protein RABA4a from Arabidopsis thaliana (Mouse-ear cress).